Consider the following 150-residue polypeptide: Arginine repressor (150 aa).

This sequence belongs to the ArgR family.

It is found in the cytoplasm. Its pathway is amino-acid biosynthesis; L-arginine biosynthesis [regulation]. Its function is as follows. Regulates arginine biosynthesis genes. The sequence is that of Arginine repressor from Clostridium botulinum (strain ATCC 19397 / Type A).